A 238-amino-acid polypeptide reads, in one-letter code: tRNA (guanine-N(7)-)-methyltransferase (238 aa).

Residues Glu68, Glu93, Asp120, and Asp143 each contribute to the S-adenosyl-L-methionine site. Asp143 is an active-site residue. Residues Lys147, Asp179, and 216–219 each bind substrate; that span reads TKFE.

The protein belongs to the class I-like SAM-binding methyltransferase superfamily. TrmB family.

It carries out the reaction guanosine(46) in tRNA + S-adenosyl-L-methionine = N(7)-methylguanosine(46) in tRNA + S-adenosyl-L-homocysteine. Its pathway is tRNA modification; N(7)-methylguanine-tRNA biosynthesis. Catalyzes the formation of N(7)-methylguanine at position 46 (m7G46) in tRNA. The sequence is that of tRNA (guanine-N(7)-)-methyltransferase from Shewanella baltica (strain OS155 / ATCC BAA-1091).